The sequence spans 37 residues: Esculentin-2Ra (37 aa).

A disulfide bridge connects residues cysteine 31 and cysteine 37.

As to expression, expressed by the skin glands.

It is found in the secreted. Its function is as follows. Antimicrobial peptide. This Pelophylax ridibundus (Marsh frog) protein is Esculentin-2Ra.